Reading from the N-terminus, the 416-residue chain is Pigment epithelium-derived factor (416 aa).

A signal peptide spans 1 to 20; that stretch reads MQALVLLLWTGALLGFGRCQ. A phosphoserine mark is found at serine 112 and serine 225. Residue asparagine 283 is glycosylated (N-linked (GlcNAc...) asparagine).

It belongs to the serpin family. As to quaternary structure, interacts with PNPLA2; this interaction stimulates the phospholipase A2 activity of PNPLA2. As to expression, retinal pigment epithelial cells. Located in the interphotoreceptor matrix (IPM) which is between the retinal pigment epithelium and the neural retina.

The protein resides in the secreted. Its subcellular location is the melanosome. Its function is as follows. Neurotrophic protein; induces extensive neuronal differentiation in retinoblastoma cells. Potent inhibitor of angiogenesis. As it does not undergo the S (stressed) to R (relaxed) conformational transition characteristic of active serpins, it exhibits no serine protease inhibitory activity. In Bos taurus (Bovine), this protein is Pigment epithelium-derived factor (SERPINF1).